A 390-amino-acid chain; its full sequence is Aspergillopepsin-1 (390 aa).

An N-terminal signal peptide occupies residues 1–19 (MVNTSLLAALTAYAVAVSA). The propeptide at 20–67 (APTAPQVKGFSVNQVAVPKGVYRHPAAQLAKAYGKYHATVPTQVAAAA) is activation peptide. Residue Thr70 is glycosylated (O-linked (Man...) threonine). Positions 84–387 (YITQVTVGDD…DASGPRLGFA (304 aa)) constitute a Peptidase A1 domain. Catalysis depends on residues Asp100 and Asp281.

This sequence belongs to the peptidase A1 family.

It localises to the secreted. It catalyses the reaction Hydrolysis of proteins with broad specificity. Generally favors hydrophobic residues in P1 and P1', but also accepts Lys in P1, which leads to activation of trypsinogen. Does not clot milk.. With respect to regulation, inhibited by the microbial peptide pepstatin. In terms of biological role, secreted aspartic endopeptidase that allows assimilation of proteinaceous substrates. The scissile peptide bond is attacked by a nucleophilic water molecule activated by two aspartic residues in the active site. Shows a broad primary substrate specificity. Favors hydrophobic residues at the P1 and P1' positions, but also accepts a lysine residue in the P1 position, leading to the activation of trypsinogen and chymotrypsinogen A. The protein is Aspergillopepsin-1 (pepA) of Aspergillus oryzae (Yellow koji mold).